The chain runs to 163 residues: Ubiquitin-like protein 1-ribosomal protein eS31 fusion protein (163 aa).

Residues 1-70 (MVFVKTLHRT…IYVNLELLGG (70 aa)) enclose the Ubiquitin-like domain. Glycine 70 participates in a covalent cross-link: Glycyl lysine isopeptide (Gly-Lys) (interchain with K-? in acceptor proteins). A C4-type zinc finger spans residues 115-138 (CQQPSCGGGVFMAQHANRHYCGRC).

In the N-terminal section; belongs to the ubiquitin family. This sequence in the C-terminal section; belongs to the eukaryotic ribosomal protein eS31 family.

In Caenorhabditis elegans, this protein is Ubiquitin-like protein 1-ribosomal protein eS31 fusion protein.